A 433-amino-acid polypeptide reads, in one-letter code: Tyrosine--tRNA ligase (433 aa).

Tyr-34 contacts L-tyrosine. Residues 39–48 (PTASSLHVGS) carry the 'HIGH' region motif. Residues Tyr-169 and Gln-173 each contribute to the L-tyrosine site. Residues 229–233 (KMGKT) carry the 'KMSKS' region motif. Lys-232 provides a ligand contact to ATP. One can recognise an S4 RNA-binding domain in the interval 364–432 (IPAFVLFHTV…RYHTIVVRKG (69 aa)).

It belongs to the class-I aminoacyl-tRNA synthetase family. TyrS type 1 subfamily. Homodimer.

It is found in the cytoplasm. It catalyses the reaction tRNA(Tyr) + L-tyrosine + ATP = L-tyrosyl-tRNA(Tyr) + AMP + diphosphate + H(+). Its function is as follows. Catalyzes the attachment of tyrosine to tRNA(Tyr) in a two-step reaction: tyrosine is first activated by ATP to form Tyr-AMP and then transferred to the acceptor end of tRNA(Tyr). This is Tyrosine--tRNA ligase from Desulfosudis oleivorans (strain DSM 6200 / JCM 39069 / Hxd3) (Desulfococcus oleovorans).